We begin with the raw amino-acid sequence, 85 residues long: Large ribosomal subunit protein bL27 (85 aa).

The protein belongs to the bacterial ribosomal protein bL27 family.

The sequence is that of Large ribosomal subunit protein bL27 from Pseudomonas aeruginosa (strain LESB58).